The sequence spans 513 residues: Activin receptor type-2A (513 aa).

An N-terminal signal peptide occupies residues 1-19 (MGAAAKLAFAVFLISCSSG). Topologically, residues 20 to 135 (AILGRSETQE…TSNPVTPKPP (116 aa)) are extracellular. Cystine bridges form between Cys30–Cys60, Cys50–Cys78, Cys85–Cys104, Cys91–Cys103, and Cys105–Cys110. N-linked (GlcNAc...) asparagine glycosylation is found at Asn43 and Asn66. A helical transmembrane segment spans residues 136 to 161 (YYNILLYSLVPLMLVAGIVICAFWVY). Over 162–513 (RHHKMAYPPV…VDFPPKESSL (352 aa)) the chain is Cytoplasmic. Residues 192-485 (LQLLEVKARG…GERITQMQRL (294 aa)) enclose the Protein kinase domain. ATP-binding positions include 198 to 206 (KARGGFGCV) and Lys219. Asp322 acts as the Proton acceptor in catalysis.

This sequence belongs to the protein kinase superfamily. TKL Ser/Thr protein kinase family. TGFB receptor subfamily. In terms of assembly, part of a complex consisting of MAGI2/ARIP1, ACVR2A, ACVR1B and SMAD3. Interacts with MAGI2/ARIP1. Interacts with type I receptor ACVR1. Interacts with TSC22D1/TSC-22. Interacts with activin A/INHBA. The cofactor is Mg(2+). It depends on Mn(2+) as a cofactor.

The protein localises to the cell membrane. It carries out the reaction L-threonyl-[receptor-protein] + ATP = O-phospho-L-threonyl-[receptor-protein] + ADP + H(+). The enzyme catalyses L-seryl-[receptor-protein] + ATP = O-phospho-L-seryl-[receptor-protein] + ADP + H(+). In terms of biological role, on ligand binding, forms a receptor complex consisting of two type II and two type I transmembrane serine/threonine kinases. Type II receptors phosphorylate and activate type I receptors which autophosphorylate, then bind and activate SMAD transcriptional regulators. Receptor for activin A, activin B and inhibin A. Mediates induction of adipogenesis by GDF6. The chain is Activin receptor type-2A (ACVR2A) from Ovis aries (Sheep).